Reading from the N-terminus, the 378-residue chain is 1-acyl-sn-glycerol-3-phosphate acyltransferase delta (378 aa).

Residues 11–31 (FLCHLIFCYVFIVSGLIINTI) traverse the membrane as a helical segment. An HXXXXD motif motif is present at residues 96-101 (HKFEID). The next 3 helical transmembrane spans lie at 125–145 (ELAYVPIIGWMWYFTEMVFCT), 307–327 (TLVNWLFWASMLLYPFFRFVI), and 338–358 (LASFVLVFFVASMGVRWMIGV).

Belongs to the 1-acyl-sn-glycerol-3-phosphate acyltransferase family.

It localises to the endoplasmic reticulum membrane. The enzyme catalyses a 1-acyl-sn-glycero-3-phosphate + an acyl-CoA = a 1,2-diacyl-sn-glycero-3-phosphate + CoA. It catalyses the reaction (4Z,7Z,10Z,13Z,16Z,19Z)-docosahexaenoyl-CoA + 1-hexadecanoyl-sn-glycero-3-phosphate = 1-hexadecanoyl-2-(4Z,7Z,10Z,13Z,16Z,19Z-docosahexaenoyl)-sn-glycero-3-phosphate + CoA. The catalysed reaction is 1-octadecanoyl-sn-glycero-3-phosphate + (9Z,12Z)-octadecadienoyl-CoA = 1-octadecanoyl-2-(9Z,12Z-octadecadienoyl)-sn-glycero-3-phosphate + CoA. It carries out the reaction 1-octadecanoyl-sn-glycero-3-phosphate + (4Z,7Z,10Z,13Z,16Z,19Z)-docosahexaenoyl-CoA = 1-octadecanoyl-2-(4Z,7Z,10Z,13Z,16Z,19Z-docosahexaenoyl)-sn-glycero-3-phosphate + CoA. The enzyme catalyses (4Z,7Z,10Z,13Z,16Z,19Z)-docosahexaenoyl-CoA + 1-(9Z-octadecenoyl)-sn-glycero-3-phosphate = 1-(9Z-octadecenoyl)-2-(4Z,7Z,10Z,13Z,16Z,19Z-docosahexaenoyl)-sn-glycero-3-phosphate + CoA. The protein operates within phospholipid metabolism; CDP-diacylglycerol biosynthesis; CDP-diacylglycerol from sn-glycerol 3-phosphate: step 2/3. Its function is as follows. Converts 1-acyl-sn-glycerol-3-phosphate (lysophosphatidic acid or LPA) into 1,2-diacyl-sn-glycerol-3-phosphate (phosphatidic acid or PA) by incorporating an acyl moiety at the sn-2 position of the glycerol backbone. Exhibits high acyl-CoA specificity for polyunsaturated fatty acyl-CoA, especially docosahexaenoyl-CoA (22:6-CoA, DHA-CoA). This Bos taurus (Bovine) protein is 1-acyl-sn-glycerol-3-phosphate acyltransferase delta (AGPAT4).